We begin with the raw amino-acid sequence, 355 residues long: Vacuolar protein sorting-associated protein 37C (355 aa).

The residue at position 29 (Ser29) is a Phosphoserine. A VPS37 C-terminal domain is found at 78–167; that stretch reads VERCQEQKAK…RKPRASQELA (90 aa). Residues 159–355 form a disordered region; sequence KPRASQELAG…PPPGPAWPGY (197 aa). 2 stretches are compositionally biased toward pro residues: residues 170–186 and 194–214; these read APPP…PQGT and PQPP…PSLP. Over residues 291–304 the composition is skewed to low complexity; it reads APSPGYPQQSPYPA. The segment covering 321–355 has biased composition (pro residues); it reads PGQPQPSVPLQPPYPPGPAPPYGFPPPPGPAWPGY.

It belongs to the VPS37 family. Component of the ESCRT-I complex (endosomal sorting complex required for transport I) which consists of TSG101, VPS28, a VPS37 protein (VPS37A to -D) and MVB12A or MVB12B in a 1:1:1:1 stoichiometry. Interacts with TSG101, VPS28, MVB12A and MVB12B. Component of the ESCRT-I complex (endosomal sorting complex required for transport I) which consists of TSG101, VPS28, a VPS37 protein (VPS37A to -D) and UBAP1 in a 1:1:1:1 stoichiometry. Interacts with HGS and STAM2. Interacts with CEP55. Post-translationally, phosphorylated by TBK1.

It localises to the late endosome membrane. Component of the ESCRT-I complex, a regulator of vesicular trafficking process. Required for the sorting of endocytic ubiquitinated cargos into multivesicular bodies. May be involved in cell growth and differentiation. The sequence is that of Vacuolar protein sorting-associated protein 37C (VPS37C) from Homo sapiens (Human).